The primary structure comprises 2388 residues: Highly reducing polyketide synthase Preu1 (2388 aa).

The region spanning 7–432 (NDDIAIVGLA…GTNAHVILDD (426 aa)) is the Ketosynthase family 3 (KS3) domain. Residues C180, H315, and H355 each act as for beta-ketoacyl synthase activity in the active site. A malonyl-CoA:ACP transacylase (MAT) domain region spans residues 549 to 875 (GFVFTGQGAQ…SSVLMRGEDG (327 aa)). The active-site For malonyltransferase activity is the S641. The tract at residues 940–1074 (HDLLGAPTQD…GLGKIHYRPE (135 aa)) is N-terminal hotdog fold. The 317-residue stretch at 940–1256 (HDLLGAPTQD…CRELPNGNSQ (317 aa)) folds into the PKS/mFAS DH domain. Residues 941–1251 (DLLGAPTQDS…VEGLRCRELP (311 aa)) are dehydratase (DH) domain. The active-site Proton acceptor; for dehydratase activity is the H972. Residues 1102-1256 (TASISPVDFY…CRELPNGNSQ (155 aa)) form a C-terminal hotdog fold region. Residue D1167 is the Proton donor; for dehydratase activity of the active site. An enoyl reductase (ER) domain region spans residues 1676–1983 (KLPSDARFTS…VPTGLGKAVL (308 aa)). Residues 2007 to 2191 (ATYVLAGGLG…AATSVDLGLM (185 aa)) form a ketoreductase (KR) domain region. In terms of domain architecture, Carrier spans 2303–2380 (QANGIVLEAL…ALAEKISKAS (78 aa)). S2340 bears the O-(pantetheine 4'-phosphoryl)serine mark.

Pantetheine 4'-phosphate serves as cofactor.

Its function is as follows. Highly reducing polyketide synthase; part of a gene cluster that mediates the biosynthesis of a yet unidentified natural product. The polypeptide is Highly reducing polyketide synthase Preu1 (Preussia isomera (Coprophilous fungus)).